Here is a 1277-residue protein sequence, read N- to C-terminus: NPC intracellular cholesterol transporter 1 (1277 aa).

Positions 1–22 are cleaved as a signal peptide; it reads MSARGPAFGLLLLLLCPVQVFS. The Lumenal segment spans residues 23-269; that stretch reads QSCVWYGECG…WRILGLDAMY (247 aa). 9 disulfide bridges follow: Cys-25–Cys-74, Cys-31–Cys-42, Cys-63–Cys-109, Cys-75–Cys-113, Cys-97–Cys-238, Cys-100–Cys-160, Cys-177–Cys-184, Cys-227–Cys-243, and Cys-240–Cys-247. Asn-41 contributes to the cholesterol binding site. A glycan (N-linked (GlcNAc...) asparagine) is linked at Asn-70. Residue Gln-79 coordinates cholesterol. Residues Asn-122 and Asn-135 are each glycosylated (N-linked (GlcNAc...) asparagine). The tract at residues 175–205 is important for cholesterol binding and cholesterol transfer from NPC1 to liposomes; the sequence is LLCGREAQACNATNWIEYMFNKDNGQAPFTI. Asn-185 and Asn-222 each carry an N-linked (GlcNAc...) asparagine glycan. The chain crosses the membrane as a helical span at residues 270-290; that stretch reads VIMWSSYMAFLIVFFGAFFAV. Residues 291 to 350 are Cytoplasmic-facing; that stretch reads WCYRKRYFVSEYTPIDGNIAFSVNSSDKGQAFCCDPLGAAFERGLRRLFAQWGAFCVRHP. The helical transmembrane segment at 351 to 371 threads the bilayer; the sequence is GCVVFFSLAFIVACSSGLVFI. Topologically, residues 372 to 621 are lumenal; the sequence is RVTTDPVDLW…ELNRESNSDL (250 aa). N-linked (GlcNAc...) asparagine glycosylation is found at Asn-415, Asn-452, Asn-459, and Asn-478. Disulfide bonds link Cys-468–Cys-479 and Cys-516–Cys-533. Positions 620–785 constitute an SSD domain; the sequence is DLFTILISYA…ITCFVSLLGL (166 aa). Residues 622-642 form a helical membrane-spanning segment; it reads FTILISYAIMFLYISIALGHI. Topologically, residues 643–653 are cytoplasmic; the sequence is KSCSRLLVDSK. Residues 654-674 traverse the membrane as a helical segment; that stretch reads ISLGIAGILIVLSSVACSLGI. The Lumenal portion of the chain corresponds to 675–677; sequence FSY. A helical membrane pass occupies residues 678–698; that stretch reads IGVPLTLIVIEVIPFLVLAVG. The Cytoplasmic segment spans residues 699–734; sequence VDNIFILVQTYQRDERLQGETLDQQLGRVLGEVAPS. The helical transmembrane segment at 735–755 threads the bilayer; it reads MFLSSFSETVAFFLGGLSVVP. Residues 756-759 lie on the Lumenal side of the membrane; that stretch reads AVHT. The chain crosses the membrane as a helical span at residues 760–780; the sequence is FSLFAGMAVLIDFLLQITCFV. Over 781–832 the chain is Cytoplasmic; it reads SLLGLDIKRQEKNRLDVVCCVQGAEDGAGVQASESCLFRFFKNSYAPLLLKD. The helical transmembrane segment at 833–853 threads the bilayer; sequence WMRPIVIAVFVGVLSFSIAVL. The Lumenal segment spans residues 854-1097; that stretch reads NKVEIGLDQS…EQYLTVIDDT (244 aa). Asn-898 carries an N-linked (GlcNAc...) asparagine glycan. The cysteines at positions 909 and 914 are disulfide-linked. Asn-916, Asn-931, Asn-961, Asn-968, Asn-1028, and Asn-1063 each carry an N-linked (GlcNAc...) asparagine glycan. 3 cysteine pairs are disulfide-bonded: Cys-956-Cys-1011, Cys-957-Cys-979, and Cys-967-Cys-976. A helical membrane pass occupies residues 1098–1118; that stretch reads IFNLGVSLGAIFLVTVVLMGC. At 1119 to 1123 the chain is on the cytoplasmic side; the sequence is ELWAT. Residues 1124–1144 form a helical membrane-spanning segment; the sequence is VIMCVTIAMILVNMFGVMWLW. Residue Gly-1145 is a topological domain, lumenal. The helical transmembrane segment at 1146 to 1166 threads the bilayer; sequence ISLNAVSLVNLVMSCGISVEF. The Cytoplasmic portion of the chain corresponds to 1167 to 1194; that stretch reads CSHITRAFTLSTKGSRVDRAEEALAHMG. The helical transmembrane segment at 1195 to 1215 threads the bilayer; that stretch reads SSVFSGITLTKFGGIVVLAFA. The Lumenal segment spans residues 1216-1226; the sequence is KSQIFQIFYFR. A helical membrane pass occupies residues 1227 to 1247; that stretch reads MYLAIVLLGATHGLIFLPVLL. The Cytoplasmic segment spans residues 1248 to 1277; sequence SYIGPSINKAKSLATQERYKGTEREQLLNF. The interval 1274-1277 is required for location in lysosomes; that stretch reads LLNF. A Di-leucine motif motif is present at residues 1274–1277; it reads LLNF.

Belongs to the patched family. Interacts (via the second lumenal domain) with NPC2. Interacts with TMEM97; the interaction may decrease NPC1 availability to the cell. Interacts with TIM1. Interacts with SLC38A9; this interaction inhibits cholesterol-mediated mTORC1 activation via its sterol transport activity. N-glycosylated. In terms of tissue distribution, detected in corpus luteum, granulosa cells and adrenal gland.

The protein resides in the late endosome membrane. It is found in the lysosome membrane. The catalysed reaction is cholesterol(in) = cholesterol(out). Functionally, intracellular cholesterol transporter which acts in concert with NPC2 and plays an important role in the egress of cholesterol from the endosomal/lysosomal compartment. Unesterified cholesterol that has been released from LDLs in the lumen of the late endosomes/lysosomes is transferred by NPC2 to the cholesterol-binding pocket in the N-terminal domain of NPC1. Cholesterol binds to NPC1 with the hydroxyl group buried in the binding pocket. Binds oxysterol with higher affinity than cholesterol. May play a role in vesicular trafficking in glia, a process that may be crucial for maintaining the structural and functional integrity of nerve terminals. Inhibits cholesterol-mediated mTORC1 activation throught its interaction with SLC38A9. This Sus scrofa (Pig) protein is NPC intracellular cholesterol transporter 1.